A 42-amino-acid polypeptide reads, in one-letter code: Cytochrome b6-f complex subunit 7 (42 aa).

Residues 19–37 (AVTCIFMTLFGLSLGFALL) traverse the membrane as a helical segment.

The protein belongs to the PetM family. As to quaternary structure, the 4 large subunits of the cytochrome b6-f complex are cytochrome b6, subunit IV (17 kDa polypeptide, PetD), cytochrome f and the Rieske protein, while the 4 small subunits are PetG, PetL, PetM and PetN. The complex functions as a dimer.

Its subcellular location is the plastid. The protein localises to the chloroplast thylakoid membrane. Component of the cytochrome b6-f complex, which mediates electron transfer between photosystem II (PSII) and photosystem I (PSI), cyclic electron flow around PSI, and state transitions. The sequence is that of Cytochrome b6-f complex subunit 7 from Thalassiosira pseudonana (Marine diatom).